Consider the following 309-residue polypeptide: Methionyl-tRNA formyltransferase (309 aa).

112-115 contacts (6S)-5,6,7,8-tetrahydrofolate; the sequence is SLLP.

This sequence belongs to the Fmt family.

It catalyses the reaction L-methionyl-tRNA(fMet) + (6R)-10-formyltetrahydrofolate = N-formyl-L-methionyl-tRNA(fMet) + (6S)-5,6,7,8-tetrahydrofolate + H(+). Attaches a formyl group to the free amino group of methionyl-tRNA(fMet). The formyl group appears to play a dual role in the initiator identity of N-formylmethionyl-tRNA by promoting its recognition by IF2 and preventing the misappropriation of this tRNA by the elongation apparatus. The polypeptide is Methionyl-tRNA formyltransferase (Bartonella tribocorum (strain CIP 105476 / IBS 506)).